A 462-amino-acid polypeptide reads, in one-letter code: Bifunctional protein GlmU (462 aa).

Residues 1 to 230 (MVNKNAIILA…FEESMGVNDR (230 aa)) are pyrophosphorylase. UDP-N-acetyl-alpha-D-glucosamine is bound by residues 9-12 (LAAG), lysine 23, glutamine 73, 78-79 (GT), 101-103 (SGD), glycine 140, glutamate 155, asparagine 170, and asparagine 228. Aspartate 103 provides a ligand contact to Mg(2+). Residue asparagine 228 participates in Mg(2+) binding. The segment at 231 to 251 (VALSQATKVMRQRINTAHMRN) is linker. Positions 252-462 (GVTLIDPEST…LPVAKDEEWQ (211 aa)) are N-acetyltransferase. The UDP-N-acetyl-alpha-D-glucosamine site is built by arginine 333 and lysine 351. The active-site Proton acceptor is histidine 363. UDP-N-acetyl-alpha-D-glucosamine is bound by residues tyrosine 366 and asparagine 377. Acetyl-CoA-binding positions include 386 to 387 (NY), serine 405, alanine 423, and arginine 440.

The protein in the N-terminal section; belongs to the N-acetylglucosamine-1-phosphate uridyltransferase family. It in the C-terminal section; belongs to the transferase hexapeptide repeat family. Homotrimer. The cofactor is Mg(2+).

Its subcellular location is the cytoplasm. The enzyme catalyses alpha-D-glucosamine 1-phosphate + acetyl-CoA = N-acetyl-alpha-D-glucosamine 1-phosphate + CoA + H(+). It carries out the reaction N-acetyl-alpha-D-glucosamine 1-phosphate + UTP + H(+) = UDP-N-acetyl-alpha-D-glucosamine + diphosphate. Its pathway is nucleotide-sugar biosynthesis; UDP-N-acetyl-alpha-D-glucosamine biosynthesis; N-acetyl-alpha-D-glucosamine 1-phosphate from alpha-D-glucosamine 6-phosphate (route II): step 2/2. It participates in nucleotide-sugar biosynthesis; UDP-N-acetyl-alpha-D-glucosamine biosynthesis; UDP-N-acetyl-alpha-D-glucosamine from N-acetyl-alpha-D-glucosamine 1-phosphate: step 1/1. It functions in the pathway bacterial outer membrane biogenesis; LPS lipid A biosynthesis. In terms of biological role, catalyzes the last two sequential reactions in the de novo biosynthetic pathway for UDP-N-acetylglucosamine (UDP-GlcNAc). The C-terminal domain catalyzes the transfer of acetyl group from acetyl coenzyme A to glucosamine-1-phosphate (GlcN-1-P) to produce N-acetylglucosamine-1-phosphate (GlcNAc-1-P), which is converted into UDP-GlcNAc by the transfer of uridine 5-monophosphate (from uridine 5-triphosphate), a reaction catalyzed by the N-terminal domain. The protein is Bifunctional protein GlmU of Latilactobacillus sakei subsp. sakei (strain 23K) (Lactobacillus sakei subsp. sakei).